The following is a 272-amino-acid chain: HMP-PP phosphatase (272 aa).

Residue aspartate 8 is the Nucleophile of the active site. 3 residues coordinate Mg(2+): aspartate 8, aspartate 10, and aspartate 212.

It belongs to the HAD-like hydrolase superfamily. Cof family. The cofactor is Mg(2+).

The catalysed reaction is 4-amino-2-methyl-5-(diphosphooxymethyl)pyrimidine + H2O = 4-amino-2-methyl-5-(phosphooxymethyl)pyrimidine + phosphate + H(+). In terms of biological role, catalyzes the hydrolysis of 4-amino-2-methyl-5-hydroxymethylpyrimidine pyrophosphate (HMP-PP) to 4-amino-2-methyl-5-hydroxymethylpyrimidine phosphate (HMP-P). This chain is HMP-PP phosphatase, found in Salmonella enteritidis PT4 (strain P125109).